A 647-amino-acid chain; its full sequence is Exoribonuclease 2 (647 aa).

The RNB domain occupies 192–519 (RIDLTSLDFV…NHRLLKAIIQ (328 aa)). One can recognise an S1 motif domain in the interval 564-646 (EQRFTAEIID…ETRNIVARPT (83 aa)).

The protein belongs to the RNR ribonuclease family. RNase II subfamily.

Its subcellular location is the cytoplasm. The enzyme catalyses Exonucleolytic cleavage in the 3'- to 5'-direction to yield nucleoside 5'-phosphates.. Its function is as follows. Involved in mRNA degradation. Hydrolyzes single-stranded polyribonucleotides processively in the 3' to 5' direction. This is Exoribonuclease 2 from Photorhabdus laumondii subsp. laumondii (strain DSM 15139 / CIP 105565 / TT01) (Photorhabdus luminescens subsp. laumondii).